An 87-amino-acid polypeptide reads, in one-letter code: DNA-directed RNA polymerase subunit omega (87 aa).

This sequence belongs to the RNA polymerase subunit omega family. In terms of assembly, the RNAP catalytic core consists of 2 alpha, 1 beta, 1 beta' and 1 omega subunit. When a sigma factor is associated with the core the holoenzyme is formed, which can initiate transcription.

The catalysed reaction is RNA(n) + a ribonucleoside 5'-triphosphate = RNA(n+1) + diphosphate. In terms of biological role, promotes RNA polymerase assembly. Latches the N- and C-terminal regions of the beta' subunit thereby facilitating its interaction with the beta and alpha subunits. The sequence is that of DNA-directed RNA polymerase subunit omega from Acidothermus cellulolyticus (strain ATCC 43068 / DSM 8971 / 11B).